The sequence spans 152 residues: Snaclec anticoagulant protein subunit A (152 aa).

The signal sequence occupies residues 1-23; that stretch reads MGRFIFVSFGLLVVYLSLSGTAA. Positions 24–152 constitute a C-type lectin domain; that stretch reads DCSSSWSSYE…EQRDPFVCEA (129 aa). 3 disulfide bridges follow: cysteine 25/cysteine 36, cysteine 53/cysteine 150, and cysteine 125/cysteine 142. Positions 64, 66, and 70 each coordinate Ca(2+). Residue glutamate 151 coordinates Ca(2+).

This sequence belongs to the snaclec family. As to quaternary structure, heterodimer of subunits A and B; disulfide-linked. Expressed by the venom gland.

It localises to the secreted. Its function is as follows. Anticoagulant protein which binds to the gamma-carboxyglutamic acid-domain regions of factors IX and factor X in the presence of calcium with a 1 to 1 stoichiometry. Also inhibits platelet aggregation by binding to platelet glycoprotein Ibalpha (GP1BA) and functioning as a blocker of vWF. Is devoid of hemorrhagic and lethal activities. Possesses antithrombotic and thrombolytic activities. Also hydrolyzes the Aalpha-chain of fibrinogen. Does not affect the Bbeta-chain and the gamma chain. The protein is Snaclec anticoagulant protein subunit A of Deinagkistrodon acutus (Hundred-pace snake).